The primary structure comprises 122 residues: Small ribosomal subunit protein uS13c (122 aa).

Belongs to the universal ribosomal protein uS13 family. Part of the 30S ribosomal subunit.

It is found in the plastid. Its subcellular location is the chloroplast. Functionally, located at the top of the head of the 30S subunit, it contacts several helices of the 16S rRNA. This Cyanidium caldarium (Red alga) protein is Small ribosomal subunit protein uS13c.